The primary structure comprises 438 residues: MKKSKSKKKAAKAQEVEVKEPVKEPEPLPELEAAEDLQDLPEPDPELLASEPELEDLADPLDLEGPLEADLLPEEGLLEEEEEELSLPKVSTSDPVRQYLHEIGQVPLLTLEEEIDLARKVEEGMEAIKKLSEATGLDQELIREVVRAKILGTARIQKIPGLKEKPDPKTVEEVDGKLKSLPKELKRYLHIAREGEAARQHLIEANLRLVVSIAKKYTGRGLSFLDLIQEGNQGLIRAVEKFEYKRRFKFSTYATWWIRQAINRAIADQARTIRIPVHMVETINKLSRTARQLQQELGREPSYEEIAEAMGPGWDAKRVEETLKIAQEPVSLETPIGDEKDSFYGDFIPDENLPSPVEAAAQSLLSEELEKALSKLSEREAMVLKLRKGLIDGREHTLEEVGAYFGVTRERIRQIENKALRKLKYHESRTRKLRDFLE.

The segment covering 1–11 (MKKSKSKKKAA) has biased composition (basic residues). The interval 1–69 (MKKSKSKKKA…PLDLEGPLEA (69 aa)) is disordered. Residues 12–26 (KAQEVEVKEPVKEPE) are compositionally biased toward basic and acidic residues. 2 stretches are compositionally biased toward acidic residues: residues 27-45 (PLPELEAAEDLQDLPEPDP) and 52-69 (PELEDLADPLDLEGPLEA). Residues 93–128 (SDPVRQYLHEIGQVPLLTLEEEIDLARKVEEGMEAI) are sigma-70 factor domain-1. The segment at 202-272 (LIEANLRLVV…NRAIADQART (71 aa)) is sigma-70 factor domain-2. The Interaction with polymerase core subunit RpoC motif lies at 226–229 (DLIQ). The tract at residues 281–359 (ETINKLSRTA…DENLPSPVEA (79 aa)) is sigma-70 factor domain-3. The segment at 372 to 424 (ALSKLSEREAMVLKLRKGLIDGREHTLEEVGAYFGVTRERIRQIENKALRKLK) is sigma-70 factor domain-4. Positions 398 to 417 (LEEVGAYFGVTRERIRQIEN) form a DNA-binding region, H-T-H motif.

The protein belongs to the sigma-70 factor family. RpoD/SigA subfamily. As to quaternary structure, interacts transiently with the RNA polymerase catalytic core formed by RpoA, RpoB, RpoC and RpoZ (2 alpha, 1 beta, 1 beta' and 1 omega subunit) to form the RNA polymerase holoenzyme that can initiate transcription.

The protein resides in the cytoplasm. Functionally, sigma factors are initiation factors that promote the attachment of RNA polymerase to specific initiation sites and are then released. This sigma factor is the primary sigma factor during exponential growth. This Thermus aquaticus protein is RNA polymerase sigma factor SigA.